We begin with the raw amino-acid sequence, 208 residues long: MGISRDSWHKRYKTGATQPVPHKKRKFELGRPAANTKIGAHRVRLVRTRGGNEKYRALRLDSGNFSWASEQTTRKTRIVDTMYNATNNELVRTKTLVKGAIISVDAAPFRQWYEAHYALPLARKKNAKLSEEDNAILNKKRSHHTMKKYTERQKTAAVDALLIEQFNTGRLLARISSSPGQVGQANGYILEGKELDFYLRKIRAKKAK.

It belongs to the eukaryotic ribosomal protein eS8 family. In terms of assembly, component of the small ribosomal subunit. Identified in a IGF2BP1-dependent mRNP granule complex containing untranslated mRNAs. Part of the small subunit (SSU) processome, composed of more than 70 proteins and the RNA chaperone small nucleolar RNA (snoRNA) U3.

The protein localises to the cytoplasm. Its subcellular location is the membrane. It localises to the nucleus. It is found in the nucleolus. Its function is as follows. Component of the small ribosomal subunit. The ribosome is a large ribonucleoprotein complex responsible for the synthesis of proteins in the cell. Part of the small subunit (SSU) processome, first precursor of the small eukaryotic ribosomal subunit. During the assembly of the SSU processome in the nucleolus, many ribosome biogenesis factors, an RNA chaperone and ribosomal proteins associate with the nascent pre-rRNA and work in concert to generate RNA folding, modifications, rearrangements and cleavage as well as targeted degradation of pre-ribosomal RNA by the RNA exosome. The polypeptide is Small ribosomal subunit protein eS8 (rps-8) (Caenorhabditis elegans).